A 413-amino-acid polypeptide reads, in one-letter code: NADH-quinone oxidoreductase subunit D (413 aa).

Belongs to the complex I 49 kDa subunit family. As to quaternary structure, NDH-1 is composed of 14 different subunits. Subunits NuoB, C, D, E, F, and G constitute the peripheral sector of the complex.

Its subcellular location is the cell inner membrane. It catalyses the reaction a quinone + NADH + 5 H(+)(in) = a quinol + NAD(+) + 4 H(+)(out). Its function is as follows. NDH-1 shuttles electrons from NADH, via FMN and iron-sulfur (Fe-S) centers, to quinones in the respiratory chain. The immediate electron acceptor for the enzyme in this species is believed to be ubiquinone. Couples the redox reaction to proton translocation (for every two electrons transferred, four hydrogen ions are translocated across the cytoplasmic membrane), and thus conserves the redox energy in a proton gradient. In Rhodobacter capsulatus (Rhodopseudomonas capsulata), this protein is NADH-quinone oxidoreductase subunit D.